The chain runs to 512 residues: Norfluorocurarine oxidase (512 aa).

Residues 3-23 traverse the membrane as a helical segment; that stretch reads LLLNPSLFSLLPLLLFIIFLF. Cys-453 lines the heme pocket.

The protein belongs to the cytochrome P450 family. Heme serves as cofactor.

Its subcellular location is the membrane. It catalyses the reaction norfluorocurarine + reduced [NADPH--hemoprotein reductase] + O2 = 18-hydroxynorfluorocurarine + oxidized [NADPH--hemoprotein reductase] + H2O + H(+). The protein operates within alkaloid biosynthesis. Functionally, monooxygenase involved in the biosynthesis of curare monoterpene indole alkaloids (MIAs), natural products such as diaboline, a pharmacologically active compound used to regulate blood pressure. Curare alkaloids act as animal glycine receptor antagonists. Catalyzes the conversion of norfluorocurarine to 18-OH norfluorocurarine. The sequence is that of Norfluorocurarine oxidase from Strychnos sp.